The following is a 175-amino-acid chain: Vitamin K epoxide reductase complex subunit 1-like protein 1 (175 aa).

Topologically, residues 1–12 are cytoplasmic; sequence MAAPVLRVSTPR. Residues 13 to 35 traverse the membrane as a helical segment; that stretch reads WERIARVLVCLLGILLSLYAFHV. At 36–86 the chain is on the lumenal side; sequence EREHARDPSYKALCDVSSSISCSKVFGSRWGRGFGLLGSIFGNDSALNQPN. The cysteines at positions 49 and 57 are disulfide-linked. N86 serves as a coordination point for (S)-warfarin. A helical membrane pass occupies residues 87 to 101; the sequence is SVYGIVFYAFQLLLG. At 102-106 the chain is on the cytoplasmic side; it reads MTVSA. Residues 107–134 traverse the membrane as a helical segment; sequence MAALILMTTSIMSVVGSLYLGYILYFVL. Residues 135–137 lie on the Lumenal side of the membrane; it reads KDL. A disulfide bond links C138 and C141. A helical transmembrane segment spans residues 138–159; it reads CVICVTTYALNFILFVLNYKRL. The phylloquinone site is built by C141 and Y145. A (S)-warfarin-binding site is contributed by Y145. The Cytoplasmic portion of the chain corresponds to 160 to 175; that stretch reads VYLNEAWKQKLQAKQD.

It belongs to the VKOR family.

The protein localises to the endoplasmic reticulum membrane. The catalysed reaction is phylloquinone + [protein]-disulfide + H2O = 2,3-epoxyphylloquinone + [protein]-dithiol. The enzyme catalyses phylloquinol + [protein]-disulfide = phylloquinone + [protein]-dithiol. Inhibited by warfarin (coumadin). Warfarin locks VKORC1 in both redox states into the closed conformation. In terms of biological role, involved in vitamin K metabolism. Can reduce inactive vitamin K 2,3-epoxide to active vitamin K, and may contribute to vitamin K-mediated protection against oxidative stress. Plays a role in vitamin K-dependent gamma-carboxylation of Glu residues in target proteins. This is Vitamin K epoxide reductase complex subunit 1-like protein 1 (vkorc1l1) from Takifugu rubripes (Japanese pufferfish).